A 718-amino-acid chain; its full sequence is Serine/threonine-protein kinase tousled-like 2 (718 aa).

Residues 24–85 form a disordered region; it reads GVSKGPLNSE…KGTPRGHKIS (62 aa). A compositionally biased stretch (polar residues) spans 29–44; it reads PLNSESSNQSLCSVGS. Over residues 46–61 the composition is skewed to basic and acidic residues; sequence SDKEVETPEKKQNDQR. Residues Ser-73, Gln-94, Leu-99, and Ser-102 each carry the phosphoserine modification. Residues 147 to 176 form a disordered region; it reads QQNSPSSTGSGNTEHSCSSQKQISIQHRQT. Residues 193–244 are required for interaction with TLK1 and DYNLL1/LC8; that stretch reads NSDLEKKEGRIDDLLRANCDLRRQIDEQQKMLEKYKERLNRCVTMSKKLLIE. Coiled coils occupy residues 193–244, 285–315, and 349–397; these read NSDL…LLIE, AFQNLIKQQERINSQREEIERQRKMLAKRKP, and HEQE…DNSQ. The tract at residues 310–337 is disordered; sequence LAKRKPPAMGQAPPATNEQKQRKSKTNG. Positions 408 to 687 constitute a Protein kinase domain; sequence YLLLHLLGRG…VQQLACDPYL (280 aa). ATP contacts are provided by residues 414–422 and Lys-437; that span reads LGRGGFSEV. Asp-538 functions as the Proton acceptor in the catalytic mechanism. Ser-696 carries the phosphoserine; by CHEK1 modification.

Belongs to the protein kinase superfamily. Ser/Thr protein kinase family. Monomer. May form homodimers; homodimerization may enhance autophosphoylation and enzymatic activity. Heterodimer with TLK1. Interacts with YWHAZ; association with 14-3-3 proteins such as YWHAZ regulates subcellular location. May also interact with FEZ1/LZTS1 and FEZ2. Interacts with CHD7 and CHD8. Interacts with DYNLL1/LC8. The cofactor is Mg(2+). Post-translationally, phosphorylated at Ser-696, probably by CHEK1. In terms of processing, autophosphorylated; phosphorylation promotes the assembly of higher order oligomers and enzymatic activity. As to expression, ubiquitously expressed in all tissues examined, with high levels in heart and testis, in particular the pachytene spermatocytes and in round spermatids. Some evidence for the existence of a testis-specific isoform suggesting a role in spermatogenesis.

It localises to the nucleus. It is found in the nucleoplasm. The protein localises to the cytoplasm. Its subcellular location is the perinuclear region. The protein resides in the cytoskeleton. It carries out the reaction L-seryl-[protein] + ATP = O-phospho-L-seryl-[protein] + ADP + H(+). The enzyme catalyses L-threonyl-[protein] + ATP = O-phospho-L-threonyl-[protein] + ADP + H(+). Its activity is regulated as follows. Cell cycle-regulated, with maximal activity in the S-phase. Rapidly and transiently inhibited by phosphorylation following the generation of DNA double-stranded breaks during S-phase, probably by CHEK1, possibly at Ser-696. This inhibition is cell cycle checkpoint- and ATM-dependent. Serine/threonine-protein kinase involved in the process of chromatin assembly and probably also DNA replication, transcription, repair, and chromosome segregation. Phosphorylates the chromatin assembly factors ASF1A and ASF1B. Phosphorylation of ASF1A prevents its proteasome-mediated degradation, thereby enhancing chromatin assembly. Negative regulator of amino acid starvation-induced autophagy. Its function is as follows. Testis-specific isoforms may play a role in spermatogenesis. Highly expressed in embryos throughout development. This chain is Serine/threonine-protein kinase tousled-like 2 (Tlk2), found in Mus musculus (Mouse).